The primary structure comprises 180 residues: Small ribosomal subunit protein uS5 (180 aa).

The tract at residues 1–26 (MAEEKDKKQSSRRRNNRRTEKESEWQ) is disordered. The span at 17–26 (RRTEKESEWQ) shows a compositional bias: basic and acidic residues. The region spanning 25–88 (WQERVVQIRR…ADGKKHLVNV (64 aa)) is the S5 DRBM domain.

The protein belongs to the universal ribosomal protein uS5 family. In terms of assembly, part of the 30S ribosomal subunit. Contacts proteins S4 and S8.

Functionally, with S4 and S12 plays an important role in translational accuracy. Located at the back of the 30S subunit body where it stabilizes the conformation of the head with respect to the body. In Synechococcus elongatus (strain ATCC 33912 / PCC 7942 / FACHB-805) (Anacystis nidulans R2), this protein is Small ribosomal subunit protein uS5.